A 191-amino-acid polypeptide reads, in one-letter code: Protein GrpE (191 aa).

It belongs to the GrpE family. As to quaternary structure, homodimer.

The protein resides in the cytoplasm. In terms of biological role, participates actively in the response to hyperosmotic and heat shock by preventing the aggregation of stress-denatured proteins, in association with DnaK and GrpE. It is the nucleotide exchange factor for DnaK and may function as a thermosensor. Unfolded proteins bind initially to DnaJ; upon interaction with the DnaJ-bound protein, DnaK hydrolyzes its bound ATP, resulting in the formation of a stable complex. GrpE releases ADP from DnaK; ATP binding to DnaK triggers the release of the substrate protein, thus completing the reaction cycle. Several rounds of ATP-dependent interactions between DnaJ, DnaK and GrpE are required for fully efficient folding. This is Protein GrpE from Helicobacter pylori (strain P12).